A 423-amino-acid chain; its full sequence is Hypoxia responsive morphology factor B (423 aa).

The Bipartite nuclear localization signal motif lies at Lys-46 to Val-69. The interval Thr-157–Pro-187 is RNA recognition motif (RRM)-like domain. The span at Leu-243 to Ile-257 shows a compositional bias: polar residues. Positions Leu-243–Ser-273 are disordered.

It belongs to the hrmA family.

The protein resides in the nucleus. Probably modulates the generation of the hypoxia-typic morphotype (called H-MORPH) with altered biofilm architecture that leads to increased host inflammation, rapid disease progression, and mortality in a murine model of invasive aspergillosis. The protein is Hypoxia responsive morphology factor B of Aspergillus fumigatus (strain CBS 144.89 / FGSC A1163 / CEA10) (Neosartorya fumigata).